A 295-amino-acid polypeptide reads, in one-letter code: MSKIRQIAFYGKGGIGKSTTSQNTLAALVELGQKILIVGCDPKADSTRLILNSKAQDTVLSLAAEAGSVEDLELEDVLKLGYKDIKCVESGGPEPGVGCAGRGVITSINFLEENGAYDDVDYVSYDVLGDVVCGGFAMPIRENKAQEIYIVMSGEMMALYAANNIAKGILKYAGTGGVRLGGLICNERQTDREYELAEALAKRLNSKLIHFVPRNNIVQHAELRKQTVLQYAPDSDQANEYRELARKIHENSGKGTIPTPITMEELEEMLLEFGIMKTEEQELAELAAKESAVAK.

Residue 11-18 (GKGGIGKS) participates in ATP binding. A [4Fe-4S] cluster-binding site is contributed by Cys-99. Arg-102 is subject to ADP-ribosylarginine; by dinitrogenase reductase ADP-ribosyltransferase. Cys-133 is a binding site for [4Fe-4S] cluster.

Belongs to the NifH/BchL/ChlL family. As to quaternary structure, homodimer. [4Fe-4S] cluster is required as a cofactor. The reversible ADP-ribosylation of Arg-102 inactivates the nitrogenase reductase and regulates nitrogenase activity.

The catalysed reaction is N2 + 8 reduced [2Fe-2S]-[ferredoxin] + 16 ATP + 16 H2O = H2 + 8 oxidized [2Fe-2S]-[ferredoxin] + 2 NH4(+) + 16 ADP + 16 phosphate + 6 H(+). In terms of biological role, the key enzymatic reactions in nitrogen fixation are catalyzed by the nitrogenase complex, which has 2 components: the iron protein and the molybdenum-iron protein. The chain is Nitrogenase iron protein from Zymomonas mobilis subsp. mobilis (strain ATCC 31821 / ZM4 / CP4).